The primary structure comprises 392 residues: Autophagy-related protein 21 (392 aa).

2 WD repeats span residues 200–240 (VHQS…NDEP) and 250–289 (SRPS…TEAD). A L/FRRG motif motif is present at residues 246 to 250 (FRRGS).

It belongs to the WD repeat PROPPIN family.

It localises to the cytoplasm. It is found in the membrane. The protein localises to the vacuole membrane. In terms of biological role, required for cytoplasm to vacuole transport (Cvt) vesicles formation and mitophagy. Involved in binding of phosphatidylethanolamine to ATG8 and in recruitment of ATG8 and ATG5 to the pre-autophagosomal structure. Protects ATG8 from ARG4-mediated cleavage. This Kluyveromyces lactis (strain ATCC 8585 / CBS 2359 / DSM 70799 / NBRC 1267 / NRRL Y-1140 / WM37) (Yeast) protein is Autophagy-related protein 21 (ATG21).